Consider the following 770-residue polypeptide: ATP-dependent RNA helicase HCA4 (770 aa).

Positions 41-69 (KFFKDLPISDPTLKGLRESSFIKLTEIQA) match the Q motif motif. The 175-residue stretch at 72–246 (IPVSLQGHDV…RLSLTDYKTV (175 aa)) folds into the Helicase ATP-binding domain. 85–92 (AKTGSGKT) contributes to the ATP binding site. The DEAD box motif lies at 194–197 (DEAD). The region spanning 278–437 (KLDILFSFIK…SIKPQLQSLL (160 aa)) is the Helicase C-terminal domain. Serine 692, serine 710, serine 714, and serine 743 each carry phosphoserine. A disordered region spans residues 705–724 (GTGNLSDDMSDGDMPDSEGH).

The protein belongs to the DEAD box helicase family. DDX10/DBP4 subfamily. As to quaternary structure, interacts with the U3 and U14 snoRNAs. Associates with pre-ribosomal complexes.

The protein localises to the nucleus. The protein resides in the nucleolus. It catalyses the reaction ATP + H2O = ADP + phosphate + H(+). Functionally, ATP-dependent RNA helicase required for ribosome biogenesis. Involved in the release of U14 snoRNA in pre-ribosomal complexes. Required for pre-rRNA cleavage at site A2. In Saccharomyces cerevisiae (strain ATCC 204508 / S288c) (Baker's yeast), this protein is ATP-dependent RNA helicase HCA4 (HCA4).